The chain runs to 451 residues: Arginine biosynthesis bifunctional protein ArgJ, mitochondrial (451 aa).

Substrate is bound by residues Thr180, Lys209, Thr220, Glu307, Asn446, and Thr451. Thr220 serves as the catalytic Nucleophile.

It belongs to the ArgJ family. In terms of assembly, heterodimer of an alpha and a beta chain. Post-translationally, the alpha and beta chains are autoproteolytically processed from a single precursor protein within the mitochondrion.

The protein resides in the mitochondrion matrix. The catalysed reaction is N(2)-acetyl-L-ornithine + L-glutamate = N-acetyl-L-glutamate + L-ornithine. It catalyses the reaction L-glutamate + acetyl-CoA = N-acetyl-L-glutamate + CoA + H(+). It functions in the pathway amino-acid biosynthesis; L-arginine biosynthesis; L-ornithine and N-acetyl-L-glutamate from L-glutamate and N(2)-acetyl-L-ornithine (cyclic): step 1/1. The protein operates within amino-acid biosynthesis; L-arginine biosynthesis; N(2)-acetyl-L-ornithine from L-glutamate: step 1/4. Functionally, catalyzes two activities which are involved in the cyclic version of arginine biosynthesis: the synthesis of acetylglutamate from glutamate and acetyl-CoA, and of ornithine by transacetylation between acetylornithine and glutamate. The polypeptide is Arginine biosynthesis bifunctional protein ArgJ, mitochondrial (Fusarium vanettenii (strain ATCC MYA-4622 / CBS 123669 / FGSC 9596 / NRRL 45880 / 77-13-4) (Fusarium solani subsp. pisi)).